We begin with the raw amino-acid sequence, 263 residues long: Nicotinamide riboside transporter PnuC (263 aa).

Residues 1–40 (MQYGMDSFGLRGIPHQVFIKKKEGKIMSLAWWKRELFGGW) are Cytoplasmic-facing. Residues 41 to 61 (THFEAVWLLMFLGIQAVVFVF) traverse the membrane as a helical segment. Asn-62 is a topological domain (periplasmic). Residues 63–83 (PDSWLASVAAVTGILCVVFVG) form a helical membrane-spanning segment. Topologically, residues 84–86 (KGK) are cytoplasmic. Residues 87-107 (ISNYLFGLISVSLYAYVSYTF) traverse the membrane as a helical segment. Topologically, residues 108–109 (KL) are periplasmic. The helical transmembrane segment at 110–131 (YGEMMLNLLVYVPVQFVGFAMW) threads the bilayer. Gln-124 contributes to the beta-nicotinamide D-riboside binding site. Residues 132–155 (RKHMALGETAETEEVKAKALTVRQ) lie on the Cytoplasmic side of the membrane. Residues 156-177 (WLLVVAASVVGTSVYIEWLHHL) traverse the membrane as a helical segment. Residues 178-180 (GSA) are Periplasmic-facing. Residues 181–201 (LPTLDGVTVVVSIVAQVLMIL) form a helical membrane-spanning segment. Gln-196 serves as a coordination point for beta-nicotinamide D-riboside. Over 202 to 205 (RYRE) the chain is Cytoplasmic. The chain crosses the membrane as a helical span at residues 206–226 (QWALWIVVNILTISLWAVAWF). Trp-210 and Asn-214 together coordinate beta-nicotinamide D-riboside. The Periplasmic segment spans residues 227–232 (KNGETS). The helical transmembrane segment at 233 to 253 (LPLLLMYVMYLCNSVYGYINW) threads the bilayer. Position 242 (Tyr-242) interacts with beta-nicotinamide D-riboside. The Cytoplasmic segment spans residues 254 to 263 (TKLVKRHSGQ).

This sequence belongs to the nicotinamide ribonucleoside (NR) uptake permease (TC 4.B.1) family. Homotrimer.

The protein resides in the cell inner membrane. Functionally, required for nicotinamide riboside transport across the inner membrane. The polypeptide is Nicotinamide riboside transporter PnuC (Neisseria mucosa (strain ATCC 25996 / DSM 4631 / NCTC 10774 / M26)).